The following is a 101-amino-acid chain: Small ribosomal subunit protein bS6 (101 aa).

It belongs to the bacterial ribosomal protein bS6 family.

In terms of biological role, binds together with bS18 to 16S ribosomal RNA. This is Small ribosomal subunit protein bS6 from Oleidesulfovibrio alaskensis (strain ATCC BAA-1058 / DSM 17464 / G20) (Desulfovibrio alaskensis).